The primary structure comprises 659 residues: Cytochrome bo(3) ubiquinol oxidase subunit 1 (659 aa).

Residues 1 to 14 are Extracellular-facing; sequence MFGKLSLNSIPYHD. A helical transmembrane segment spans residues 15 to 35; it reads PIIMITCCVVILVFLVISIII. Residues 36 to 56 lie on the Cytoplasmic side of the membrane; that stretch reads TIAQKWQYLWNEWCCTVDHKK. A helical membrane pass occupies residues 57-77; it reads IAKMYIFLAFIMLFRGFADAI. A ubiquinone contacts are provided by Arg-71, Asp-75, and His-101. The Extracellular segment spans residues 78-109; that stretch reads MMRMQQFLVSSYHGNGTGFLPPHHYDQIFTAH. His-109 is a binding site for heme b. The chain crosses the membrane as a helical span at residues 110 to 130; it reads GVIMIFFVAMPLVIGLMNFVV. Topologically, residues 131 to 148 are cytoplasmic; the sequence is PLQIGSRDVAFPFLNNLS. A helical membrane pass occupies residues 149-169; that stretch reads LWLTIFSALLMNVSLGIGEFA. Over 170–192 the chain is Extracellular; the sequence is QTGWLAYPPLSELQYSPGVGVDY. Trp-173 is a heme b binding site. A helical membrane pass occupies residues 193–213; sequence WIWSLQISGIGTTLTAINFLV. Residues 214-235 are Cytoplasmic-facing; it reads TIIKMRSSGMNWFKIPVFTWTS. A helical transmembrane segment spans residues 236-256; sequence FCTNILIIASFPVLTVSLLLL. Residues 257 to 280 are Extracellular-facing; it reads TLDRYLGFHFFTNDFGGNMMMYVN. The helical transmembrane segment at 281-301 threads the bilayer; that stretch reads LIWIWGHPEVYILILPVFGIF. His-287 is a Cu(2+) binding site. Positions 287-291 form a cross-link, 1'-histidyl-3'-tyrosine (His-Tyr); that stretch reads HPEVY. Tyr-291 is a Fe(II)-heme o binding site. The Cytoplasmic segment spans residues 302 to 318; it reads SEVVATFSSKELFGYTS. A helical membrane pass occupies residues 319–339; that stretch reads LIWATIVITILSFIVWLHHFF. Residues His-336 and His-337 each coordinate Cu(2+). Residues 340 to 350 lie on the Extracellular side of the membrane; the sequence is TMGASANVNAF. Residues 351-371 form a helical membrane-spanning segment; it reads FGITTMIISIPTGVKIFNWLF. Residues 372-382 lie on the Cytoplasmic side of the membrane; sequence TMYRGNVRINS. A helical transmembrane segment spans residues 383 to 403; sequence IMLWTIGFLITFSIGGMAGVL. Over 404–416 the chain is Extracellular; it reads LSLPVIDFSLHNS. Residues His-414 and His-422 each coordinate Fe(II)-heme o. A helical transmembrane segment spans residues 417 to 437; that stretch reads LFLVAHFHNVIIGGVVFGCFA. His-424 contributes to the heme b binding site. The Cytoplasmic segment spans residues 438 to 459; sequence GITYWFPKLFGFMLSEKWGKRA. Residues 460–480 traverse the membrane as a helical segment; it reads FWCWFFGFFCAFMPLYALGLM. At 481–499 the chain is on the extracellular side; it reads GMTRRLSQNINPQFHSMLT. Residues Arg-484 and Arg-485 each contribute to the heme b site. The chain crosses the membrane as a helical span at residues 500–520; that stretch reads IAALGTILIFIGIVFQIIQIF. Residues 521 to 587 are Cytoplasmic-facing; the sequence is VSIRDRNLNR…KLPILYTSFH (67 aa). A helical transmembrane segment spans residues 588-608; the sequence is MPKNTKFGFLIGFFAFLLGFS. Ala-609 is a topological domain (extracellular). Residues 610–630 traverse the membrane as a helical segment; that stretch reads VWYIFWLFFISFFVIIYLLVI. Over 631–659 the chain is Cytoplasmic; it reads KSLDTNCDYIISIEEIKEIEKCINIKKMD.

It belongs to the heme-copper respiratory oxidase family. As to quaternary structure, the cytochrome bo(3) ubiquinol oxidase complex is a heterooctamer of two A chains, two B chains, two C chains and two D chains. Cu(2+) serves as cofactor. The cofactor is heme b. Fe(II)-heme o is required as a cofactor.

Its subcellular location is the cell membrane. It carries out the reaction 2 a ubiquinol + O2 + n H(+)(in) = 2 a ubiquinone + 2 H2O + n H(+)(out). In terms of biological role, cytochrome bo(3) ubiquinol oxidase is the terminal enzyme in the aerobic respiratory chain. Catalyzes the four-electron reduction of O2 to water, using a ubiquinol as a membrane soluble electron donor for molecular oxygen reduction. Has proton pump activity across the membrane in addition to electron transfer, pumping 2 protons/electron and generating a proton motive force. All the redox centers of this enzyme complex are located within the largest subunit, subunit I. Protons are probably pumped via D- and K- channels found in this subunit. This is Cytochrome bo(3) ubiquinol oxidase subunit 1 (cyoB) from Buchnera aphidicola subsp. Baizongia pistaciae (strain Bp).